The primary structure comprises 474 residues: MMGNMFGSSLASLFFLWATIQQIFPNHLKIAIKEFFLSTIQQISFAKRFSDKFINFFSPYVQINFSEYEDYRVNHAFDPIETYLGAKATDKAKHLRASQVRESKGLVLKRDETKVRDEYEGIRVWWEMETDSAGYKTLKLTFHRRSRDIVTNSYIKYVVEEGKSIDAKNKKMKLFTNNPSSHWGSSKTSFWRYIDFEHPATFETLAMDPKKKEQILNDLAAFNNGKDYYKKIGKAWKRGYLLYGPPGTGKSTMIAAMANLLNYSIYDLELTAIQNNSELRKILTATSNKSIIVIEDIDCSLDLTGKRKKKESNLMIWRKDGDQDNEENKSFVTLSGLLNFIDGIWSACGQERIIVFTTNHLAKLDPALIRRGRMDMHIELSYCTFEAFKTLAKNYLDLDSHPLFSKIESLMKETNIAPADVAENLMKKNRETDADGSLNDLIESLERKKKVQIAQVDEHKEYSNKIVEAFRKLF.

The N-terminal stretch at 1 to 25 is a signal peptide; the sequence is MMGNMFGSSLASLFFLWATIQQIFP. ATP is bound at residue 244-251; the sequence is GPPGTGKS.

This sequence belongs to the AAA ATPase family. BCS1 subfamily. It depends on Mg(2+) as a cofactor.

The enzyme catalyses ATP + H2O = ADP + phosphate + H(+). This Arabidopsis thaliana (Mouse-ear cress) protein is AAA-ATPase At3g28610.